The chain runs to 130 residues: MSGRGKQGGKARAKAKSRSSRAGLQFPVGRVHRLLRKGNYAERVGAGAPVYLAAVLEYLTAEILELAGNAARDNKKTRIIPRHLQLAIRNDEELNKLLGRVTIAQGGVLPNIQAVLLPKKTESHHKAKGK.

The segment at Met1 to Ala22 is disordered. Ser2 bears the N-acetylserine mark. Ser2 carries the phosphoserine; by RPS6KA5 modification. Arg4 carries the post-translational modification Citrulline; alternate. At Arg4 the chain carries Symmetric dimethylarginine; by PRMT5; alternate. N6-(2-hydroxyisobutyryl)lysine; alternate occurs at positions 6 and 10. An N6-acetyllysine; alternate modification is found at Lys6. Over residues Gln7–Ser19 the composition is skewed to basic residues. An N6-(beta-hydroxybutyryl)lysine; alternate mark is found at Lys10 and Lys14. Lys10 carries the N6-lactoyllysine; alternate modification. N6-succinyllysine; alternate is present on Lys10. Residue Lys14 forms a Glycyl lysine isopeptide (Lys-Gly) (interchain with G-Cter in ubiquitin); alternate linkage. Lys16 is covalently cross-linked (Glycyl lysine isopeptide (Lys-Gly) (interchain with G-Cter in ubiquitin)). At Lys37 the chain carries N6-(2-hydroxyisobutyryl)lysine; alternate. An N6-(beta-hydroxybutyryl)lysine; alternate modification is found at Lys37. Lys37 bears the N6-crotonyllysine; alternate mark. Lys75 and Lys76 each carry N6-(2-hydroxyisobutyryl)lysine. Lys96 carries the post-translational modification N6-(2-hydroxyisobutyryl)lysine; alternate. N6-(beta-hydroxybutyryl)lysine; alternate is present on Lys96. At Lys96 the chain carries N6-succinyllysine; alternate. Lys96 is modified (N6-glutaryllysine; alternate). Residue Gln105 is modified to N5-methylglutamine. Lys119 is subject to N6-(2-hydroxyisobutyryl)lysine; alternate. Residue Lys119 is modified to N6-(beta-hydroxybutyryl)lysine; alternate. N6-crotonyllysine; alternate occurs at positions 119 and 120. N6-glutaryllysine; alternate occurs at positions 119 and 120. Lys120 participates in a covalent cross-link: Glycyl lysine isopeptide (Lys-Gly) (interchain with G-Cter in ubiquitin); alternate. At Thr121 the chain carries Phosphothreonine; by DCAF1. N6-crotonyllysine; alternate is present on Lys126. Position 126 is an N6-glutaryllysine; alternate (Lys126).

This sequence belongs to the histone H2A family. As to quaternary structure, the nucleosome is a histone octamer containing two molecules each of H2A, H2B, H3 and H4 assembled in one H3-H4 heterotetramer and two H2A-H2B heterodimers. The octamer wraps approximately 147 bp of DNA. In terms of processing, deiminated on Arg-4 in granulocytes upon calcium entry. Post-translationally, monoubiquitination of Lys-120 (H2AK119Ub) by RING1, TRIM37 and RNF2/RING2 complex gives a specific tag for epigenetic transcriptional repression and participates in X chromosome inactivation of female mammals. It is involved in the initiation of both imprinted and random X inactivation. Ubiquitinated H2A is enriched in inactive X chromosome chromatin. Ubiquitination of H2A functions downstream of methylation of 'Lys-27' of histone H3 (H3K27me). H2AK119Ub by RNF2/RING2 can also be induced by ultraviolet and may be involved in DNA repair. Monoubiquitination of Lys-120 (H2AK119Ub) by TRIM37 may promote transformation of cells in a number of breast cancers. Following DNA double-strand breaks (DSBs), it is ubiquitinated through 'Lys-63' linkage of ubiquitin moieties by the E2 ligase UBE2N and the E3 ligases RNF8 and RNF168, leading to the recruitment of repair proteins to sites of DNA damage. Ubiquitination at Lys-14 and Lys-16 (H2AK13Ub and H2AK15Ub, respectively) in response to DNA damage is initiated by RNF168 that mediates monoubiquitination at these 2 sites, and 'Lys-63'-linked ubiquitin are then conjugated to monoubiquitin; RNF8 is able to extend 'Lys-63'-linked ubiquitin chains in vitro. Deubiquitinated by USP51 at Lys-14 and Lys-16 (H2AK13Ub and H2AK15Ub, respectively) after damaged DNA is repaired. H2AK119Ub and ionizing radiation-induced 'Lys-63'-linked ubiquitination (H2AK13Ub and H2AK15Ub) are distinct events. Phosphorylation on Ser-2 (H2AS1ph) is enhanced during mitosis. Phosphorylation on Ser-2 by RPS6KA5/MSK1 directly represses transcription. Acetylation of H3 inhibits Ser-2 phosphorylation by RPS6KA5/MSK1. Phosphorylation at Thr-121 (H2AT120ph) by DCAF1 is present in the regulatory region of many tumor suppresor genes and down-regulates their transcription. In terms of processing, glutamine methylation at Gln-105 (H2AQ104me) by FBL is specifically dedicated to polymerase I. It is present at 35S ribosomal DNA locus and impairs binding of the FACT complex. Post-translationally, symmetric dimethylation on Arg-4 by the PRDM1/PRMT5 complex may play a crucial role in the germ-cell lineage. Crotonylation (Kcr) is specifically present in male germ cells and marks testis-specific genes in post-meiotic cells, including X-linked genes that escape sex chromosome inactivation in haploid cells. Crotonylation marks active promoters and enhancers and confers resistance to transcriptional repressors. It is also associated with post-meiotically activated genes on autosomes. In terms of processing, lactylated in macrophages by EP300/P300 by using lactoyl-CoA directly derived from endogenous or exogenous lactate, leading to stimulates gene transcription.

It localises to the nucleus. It is found in the chromosome. Core component of nucleosome. Nucleosomes wrap and compact DNA into chromatin, limiting DNA accessibility to the cellular machineries which require DNA as a template. Histones thereby play a central role in transcription regulation, DNA repair, DNA replication and chromosomal stability. DNA accessibility is regulated via a complex set of post-translational modifications of histones, also called histone code, and nucleosome remodeling. The sequence is that of Histone H2A type 1-C from Homo sapiens (Human).